A 469-amino-acid chain; its full sequence is Dihydroorotate dehydrogenase (quinone), mitochondrial (469 aa).

The N-terminal 37 residues, 1-37, are a transit peptide targeting the mitochondrion; that stretch reads MSSSAAALAWRRSLRDALLRGSAWRGAPAANSAAARL. The helical transmembrane segment at 62–82 threads the bilayer; that stretch reads LLTGAMIGLAIAGGAYVSTAD. Residues 150–154 and Ser-174 each bind FMN; that span reads AGFDK. Lys-154 provides a ligand contact to substrate. 199-203 lines the substrate pocket; that stretch reads NRCGF. The interval 219-247 is disordered; sequence HGKRKMEETSSSTSPTTSDVKQGGKAGPG. Low complexity predominate over residues 227-236; that stretch reads TSSSTSPTTS. 2 residues coordinate FMN: Asn-252 and Asn-283. Residue 283–288 coordinates substrate; the sequence is NVSSPN. Catalysis depends on Ser-286, which acts as the Nucleophile. FMN-binding residues include Lys-328 and Ser-356. 357-358 provides a ligand contact to substrate; the sequence is NT. FMN is bound by residues Gly-380, Gly-409, and 430–431; that span reads YT.

This sequence belongs to the dihydroorotate dehydrogenase family. Type 2 subfamily. Requires FMN as cofactor.

It is found in the mitochondrion inner membrane. It carries out the reaction (S)-dihydroorotate + a quinone = orotate + a quinol. The protein operates within pyrimidine metabolism; UMP biosynthesis via de novo pathway; orotate from (S)-dihydroorotate (quinone route): step 1/1. Its function is as follows. Catalyzes the conversion of dihydroorotate to orotate with quinone as electron acceptor. This chain is Dihydroorotate dehydrogenase (quinone), mitochondrial (PYRD), found in Oryza sativa subsp. japonica (Rice).